Reading from the N-terminus, the 367-residue chain is Probable ATP-dependent RNA helicase MJ0669 (367 aa).

Positions 6 to 34 (MNFNELNLSDNILNAIRNKGFEKPTDIQM) match the Q motif motif. The region spanning 38 to 206 (PLFLNDEYNI…KKYMGDYSFI (169 aa)) is the Helicase ATP-binding domain. An ATP-binding site is contributed by 51–58 (ARTGSGKT). The DEAD box motif lies at 154–157 (DEAD). The region spanning 213–367 (NIEQSYVEVN…KLKIKKLKFG (155 aa)) is the Helicase C-terminal domain.

Belongs to the DEAD box helicase family. Homodimer.

It carries out the reaction ATP + H2O = ADP + phosphate + H(+). The chain is Probable ATP-dependent RNA helicase MJ0669 from Methanocaldococcus jannaschii (strain ATCC 43067 / DSM 2661 / JAL-1 / JCM 10045 / NBRC 100440) (Methanococcus jannaschii).